A 329-amino-acid chain; its full sequence is GTP 3',8-cyclase (329 aa).

The Radical SAM core domain occupies 8 to 234 (AFARKFYYLR…QLRQRSDGPA (227 aa)). Position 17 (arginine 17) interacts with GTP. Residues cysteine 24 and cysteine 28 each contribute to the [4Fe-4S] cluster site. Residue tyrosine 30 participates in S-adenosyl-L-methionine binding. Cysteine 31 is a [4Fe-4S] cluster binding site. GTP is bound at residue arginine 68. Position 72 (glycine 72) interacts with S-adenosyl-L-methionine. Position 99 (threonine 99) interacts with GTP. Serine 123 is a binding site for S-adenosyl-L-methionine. Lysine 160 lines the GTP pocket. Position 194 (methionine 194) interacts with S-adenosyl-L-methionine. Residues cysteine 257 and cysteine 260 each contribute to the [4Fe-4S] cluster site. GTP is bound at residue 262–264 (RLR). [4Fe-4S] cluster is bound at residue cysteine 274.

It belongs to the radical SAM superfamily. MoaA family. Monomer and homodimer. [4Fe-4S] cluster is required as a cofactor.

It catalyses the reaction GTP + AH2 + S-adenosyl-L-methionine = (8S)-3',8-cyclo-7,8-dihydroguanosine 5'-triphosphate + 5'-deoxyadenosine + L-methionine + A + H(+). Its pathway is cofactor biosynthesis; molybdopterin biosynthesis. Catalyzes the cyclization of GTP to (8S)-3',8-cyclo-7,8-dihydroguanosine 5'-triphosphate. The protein is GTP 3',8-cyclase of Escherichia fergusonii (strain ATCC 35469 / DSM 13698 / CCUG 18766 / IAM 14443 / JCM 21226 / LMG 7866 / NBRC 102419 / NCTC 12128 / CDC 0568-73).